The chain runs to 338 residues: Short-chain dehydrogenase/reductase phmF (338 aa).

NADP(+) is bound by residues L46, R71, D96, and N123. Catalysis depends on S177, which acts as the Proton donor. Positions 211 and 215 each coordinate NADP(+). The active-site Proton acceptor is the Y211. K215 functions as the Lowers pKa of active site Tyr in the catalytic mechanism.

Belongs to the short-chain dehydrogenases/reductases (SDR) family.

It participates in mycotoxin biosynthesis. Functionally, short-chain dehydrogenase/reductase; part of the gene cluster that mediates the biosynthesis of the mycotoxins phomacins, leucine-derived cytochalasans with potent actin polymerization-inhibitory activities and monocot-specific antigerminative activities. The first step in the pathway is catalyzed by the hybrid PKS-NRPS phmA, assisted by the enoyl reductase phmE, that are responsible for fusion of the leucine precursor and the polyketide backbone to produce a 2-pyrrolidone intermediate. The polyketide synthase module (PKS) of phmA is responsible for the synthesis of the polyketide backbone and the downstream nonribosomal peptide synthetase (NRPS) amidates the carboxyl end of the polyketide with the leucine precursor. Because phmA lacks a designated enoylreductase (ER) domain, the required activity is provided the enoyl reductase phmE. Reduction by the hydrolyase phmG, followed by dehydration and intra-molecular Diels-Alder cyclization by the Diels-Alderase phmD then yield the required isoindolone-fused macrocycle. A number of oxidative steps catalyzed by the tailoring cytochrome P450 monooxygenase phmB, the FAD-linked oxidoreductase phmC and the short-chain dehydrogenase/reductase phmF, are further required to afford the final products, phomacin D and phomacin E. This Phaeosphaeria nodorum (strain SN15 / ATCC MYA-4574 / FGSC 10173) (Glume blotch fungus) protein is Short-chain dehydrogenase/reductase phmF.